The primary structure comprises 286 residues: Alpha-ketoglutarate-dependent dioxygenase alkB homolog 3 (286 aa).

A disordered region spans residues glutamine 21 to lysine 45. The segment covering alanine 22 to lysine 31 has biased composition (polar residues). Residues tryptophan 115 and tyrosine 141–tyrosine 143 contribute to the substrate site. Positions threonine 172 to tyrosine 278 constitute a Fe2OG dioxygenase domain. Leucine 177 is modified ((4R)-5-hydroxyleucine; alternate). Leucine 177 carries the post-translational modification (4R)-5-oxoleucine; alternate. Asparagine 179–tyrosine 181 serves as a coordination point for 2-oxoglutarate. Fe cation contacts are provided by histidine 191 and aspartate 193. Aspartate 194 is a binding site for substrate. Histidine 257 serves as a coordination point for Fe cation. 2-oxoglutarate contacts are provided by residues arginine 269–arginine 275 and arginine 275.

It belongs to the alkB family. Interacts with the ASCC complex composed of ASCC1, ASCC2 and ASCC3. Interacts directly with ASCC3, and is thereby recruited to the ASCC complex. Interacts with OTUD4; the interaction is direct. Interacts with USP7 and USP9X. Fe(2+) serves as cofactor. Post-translationally, ubiquitinated; undergoes 'Lys-48'-linked polyubiquitination. OTUD4 promotes USP7 and USP9X-dependent deubiquitination of 'Lys-48'-polyubiquitinated ALKBH3 promoting the repair of alkylated DNA lesions. As to expression, ubiquitous. Detected in heart, pancreas, skeletal muscle, thymus, testis, ovary, spleen, prostate, small intestine, peripheral blood leukocytes, urinary bladder and colon.

It localises to the nucleus. The protein localises to the cytoplasm. It catalyses the reaction an N(1)-methyladenosine in mRNA + 2-oxoglutarate + O2 = an adenosine in mRNA + formaldehyde + succinate + CO2. The catalysed reaction is a methylated nucleobase within DNA + 2-oxoglutarate + O2 = a nucleobase within DNA + formaldehyde + succinate + CO2. It carries out the reaction an N(1)-methyl-2'-deoxyadenosine in single-stranded DNA + 2-oxoglutarate + O2 = a 2'-deoxyadenosine in single-stranded DNA + formaldehyde + succinate + CO2 + H(+). The enzyme catalyses an N(3)-methyl-2'-deoxycytidine in single-stranded DNA + 2-oxoglutarate + O2 = a 2'-deoxycytidine in single-stranded DNA + formaldehyde + succinate + CO2 + H(+). It catalyses the reaction a 3,N(4)-etheno-2'-deoxycytidine in single-stranded DNA + 2-oxoglutarate + O2 + H2O = a 2'-deoxycytidine in single-stranded DNA + glyoxal + succinate + CO2. Its activity is regulated as follows. Activated by ascorbate. Its function is as follows. Dioxygenase that mediates demethylation of DNA and RNA containing 1-methyladenosine (m1A). Repairs alkylated DNA containing 1-methyladenosine (m1A) and 3-methylcytosine (m3C) by oxidative demethylation. Has a strong preference for single-stranded DNA. Able to process alkylated m3C within double-stranded regions via its interaction with ASCC3, which promotes DNA unwinding to generate single-stranded substrate needed for ALKBH3. Can repair exocyclic 3,N4-ethenocytosine adducs in single-stranded DNA. Also acts on RNA. Demethylates N(1)-methyladenosine (m1A) RNA, an epigenetic internal modification of messenger RNAs (mRNAs) highly enriched within 5'-untranslated regions (UTRs) and in the vicinity of start codons. Requires molecular oxygen, alpha-ketoglutarate and iron. This Homo sapiens (Human) protein is Alpha-ketoglutarate-dependent dioxygenase alkB homolog 3.